Consider the following 431-residue polypeptide: MSTLQITGGQVLTPELTVRTADVLADSETGEILAVGDTAAGDRTLDAEGCLVVPGLVNTHCHAAMTLLRGYADDKPLDRWLQEDIWPVEAELTPEDIRAGTRLGLVELLKNGVTAVGDMYFEVPEVAAAVEEAGIRARLGHGIVTVGKDEADARADFEEGLAVARELDGAADGRVRTALMPHSLTTADPDLIAEFVPRARDAGVPIHYHANETTDEVDPIVDERGVRPLEFADELGLLDEGDFIAHGVHVDETEIELLAERGVGVAHCPASNMKLASGIAPVQEFLDAGVTVGIGTDGPASNNDLDVVDEMRDAAMVGKLGADDAAAVAAPDIVNAATAGGAETLGFDAGRVEAGALADLAIVDLDAPHLTPSHDLVSHLAYAVRGSDVRHTVVGGEVIVEDREVRTLDAGAVKREAERHAAELVSRAEGD.

Zn(2+) is bound by residues H60 and H62. Substrate is bound by residues E89 and H182. H209 contributes to the Zn(2+) binding site. E212 and D297 together coordinate substrate. Zn(2+) is bound at residue D297.

The protein belongs to the metallo-dependent hydrolases superfamily. MTA/SAH deaminase family. It depends on Zn(2+) as a cofactor.

It carries out the reaction S-adenosyl-L-homocysteine + H2O + H(+) = S-inosyl-L-homocysteine + NH4(+). The enzyme catalyses S-methyl-5'-thioadenosine + H2O + H(+) = S-methyl-5'-thioinosine + NH4(+). Catalyzes the deamination of 5-methylthioadenosine and S-adenosyl-L-homocysteine into 5-methylthioinosine and S-inosyl-L-homocysteine, respectively. Is also able to deaminate adenosine. The chain is 5-methylthioadenosine/S-adenosylhomocysteine deaminase from Natronomonas pharaonis (strain ATCC 35678 / DSM 2160 / CIP 103997 / JCM 8858 / NBRC 14720 / NCIMB 2260 / Gabara) (Halobacterium pharaonis).